The primary structure comprises 209 residues: Thiamine-phosphate synthase (209 aa).

Residues 32–36 (QLRMK) and D64 each bind 4-amino-2-methyl-5-(diphosphooxymethyl)pyrimidine. Residues D65 and D84 each contribute to the Mg(2+) site. T103 contributes to the 4-amino-2-methyl-5-(diphosphooxymethyl)pyrimidine binding site. 129-131 (TTT) provides a ligand contact to 2-[(2R,5Z)-2-carboxy-4-methylthiazol-5(2H)-ylidene]ethyl phosphate. K132 is a binding site for 4-amino-2-methyl-5-(diphosphooxymethyl)pyrimidine. G165 is a 2-[(2R,5Z)-2-carboxy-4-methylthiazol-5(2H)-ylidene]ethyl phosphate binding site.

It belongs to the thiamine-phosphate synthase family. The cofactor is Mg(2+).

It catalyses the reaction 2-[(2R,5Z)-2-carboxy-4-methylthiazol-5(2H)-ylidene]ethyl phosphate + 4-amino-2-methyl-5-(diphosphooxymethyl)pyrimidine + 2 H(+) = thiamine phosphate + CO2 + diphosphate. It carries out the reaction 2-(2-carboxy-4-methylthiazol-5-yl)ethyl phosphate + 4-amino-2-methyl-5-(diphosphooxymethyl)pyrimidine + 2 H(+) = thiamine phosphate + CO2 + diphosphate. The catalysed reaction is 4-methyl-5-(2-phosphooxyethyl)-thiazole + 4-amino-2-methyl-5-(diphosphooxymethyl)pyrimidine + H(+) = thiamine phosphate + diphosphate. Its pathway is cofactor biosynthesis; thiamine diphosphate biosynthesis; thiamine phosphate from 4-amino-2-methyl-5-diphosphomethylpyrimidine and 4-methyl-5-(2-phosphoethyl)-thiazole: step 1/1. Functionally, condenses 4-methyl-5-(beta-hydroxyethyl)thiazole monophosphate (THZ-P) and 2-methyl-4-amino-5-hydroxymethyl pyrimidine pyrophosphate (HMP-PP) to form thiamine monophosphate (TMP). The protein is Thiamine-phosphate synthase of Bacteroides thetaiotaomicron (strain ATCC 29148 / DSM 2079 / JCM 5827 / CCUG 10774 / NCTC 10582 / VPI-5482 / E50).